The following is a 155-amino-acid chain: Ribosome maturation factor RimP (155 aa).

This sequence belongs to the RimP family.

It is found in the cytoplasm. Functionally, required for maturation of 30S ribosomal subunits. This chain is Ribosome maturation factor RimP, found in Synechococcus sp. (strain CC9902).